The primary structure comprises 222 residues: MADEKKKVKKKKTKEEGGTSETASEAASEAATPAPAATPAPAASATGSKRASGGSRGSRKSKRAGSSVFSVFSQKQIAEFKEAFQLMDADKDGIIGKNDLRAAFDSVGKIANDKELDAMLGEASGPINFTQLLTLFANRMATSGANDEDEVVIAAFKTFDNDGLIDGDKFREMLMNFGDKFTMKEVDDAYDQMVIDDKNQIDTAALIEMLTGKGEEEEEEAA.

Residues 1 to 65 form a disordered region; the sequence is MADEKKKVKK…RGSRKSKRAG (65 aa). A2 carries the post-translational modification N-acetylalanine. Positions 19 to 53 are enriched in low complexity; sequence TSETASEAASEAATPAPAATPAPAASATGSKRASG. Phosphoserine is present on residues S66 and S67. EF-hand domains lie at 75–110, 147–180, and 181–216; these read KQIAEFKEAFQLMDADKDGIIGKNDLRAAFDSVGKI, DEDEVVIAAFKTFDNDGLIDGDKFREMLMNFGDK, and FTMKEVDDAYDQMVIDDKNQIDTAALIEMLTGKGEE. The Ca(2+) site is built by D88, D90, D92, and D99.

In terms of assembly, myosin is a hexamer of 2 heavy chains and 4 light chains.

The chain is Myosin regulatory light chain 2 (Mlc2) from Drosophila melanogaster (Fruit fly).